Consider the following 574-residue polypeptide: MAQVAANGARQPLLQLLRGPSGKLWEVCIGLEVHAQVLSRSKLMSGSAASTLSSARPNRNVSFFDAALPGTLPVINRECVHQAIRMGLAVDATVHPRSLFERKHYFYCDLPLGYQLTQQRAPVASGGALHFELPESAVVSEHGGAHSDEATFDASKYKSRKEKNEALKKWKAKQAKKQQDVISRSVRITRIQIEQDSGKSNHDLEDDSTVVDLNRAGTALLEIVMEPDLRSPVEAGQVMRQLQHLLRHLDVCDGNMEEGSMRCDLNVSVRPTNLGAEADVESLHNALTARTAAPFGERVEVKNMNSIRNMMRAAEYEARRQIALIEEEGGEVHRETRSFDAVTGETKRMRSKEGAKDYRFFPEPDLPPLVFSEKLIQEISERMPELPEALKERLCAQYDLTSYESLVLVNEPGAAPYFETVAAQNSRPSKVVVNWVLNDLFGHLKAVNGDIASSPVTATELGALIDLIQDGTISGKIAKDVLELMFYENEPKKTPLQIVEEKGWKQIQDPEEIRALCRAVLDDPKAKKNLDAYWKGKTQLFGFFIGQVMKQCGGRVHPELANSIMQEILEEHKQ.

This sequence belongs to the GatB/GatE family. GatB subfamily. Subunit of the heterotrimeric GatCAB amidotransferase (AdT) complex, composed of A, B and C subunits.

It localises to the mitochondrion. The catalysed reaction is L-glutamyl-tRNA(Gln) + L-glutamine + ATP + H2O = L-glutaminyl-tRNA(Gln) + L-glutamate + ADP + phosphate + H(+). Its function is as follows. Allows the formation of correctly charged Gln-tRNA(Gln) through the transamidation of misacylated Glu-tRNA(Gln) in the mitochondria. The reaction takes place in the presence of glutamine and ATP through an activated gamma-phospho-Glu-tRNA(Gln). The sequence is that of Glutamyl-tRNA(Gln) amidotransferase subunit B, mitochondrial from Phytophthora infestans (strain T30-4) (Potato late blight agent).